The primary structure comprises 229 residues: Ribonuclease 3 (229 aa).

The 123-residue stretch at 5-127 (LNRLERKLGH…LIGAIYLDAG (123 aa)) folds into the RNase III domain. Glu-40 provides a ligand contact to Mg(2+). Asp-44 is an active-site residue. Positions 113 and 116 each coordinate Mg(2+). The active site involves Glu-116. Residues 154-224 (DPKTRLQEFL…AAAALVALGV (71 aa)) enclose the DRBM domain.

It belongs to the ribonuclease III family. Homodimer. The cofactor is Mg(2+).

The protein resides in the cytoplasm. It carries out the reaction Endonucleolytic cleavage to 5'-phosphomonoester.. Digests double-stranded RNA. Involved in the processing of primary rRNA transcript to yield the immediate precursors to the large and small rRNAs (23S and 16S). Processes some mRNAs, and tRNAs when they are encoded in the rRNA operon. Processes pre-crRNA and tracrRNA of type II CRISPR loci if present in the organism. The polypeptide is Ribonuclease 3 (Azotobacter vinelandii (strain DJ / ATCC BAA-1303)).